The chain runs to 26 residues: Melittin (26 aa).

Position 1 is an N-formylglycine; partial (G1). Q26 is modified (glutamine amide).

It belongs to the melittin family. As to quaternary structure, monomer (in solution and for integration into membranes), homotetramer (in solution and potentially as a toroidal pore in membranes), and potenially homomultimer (as a toroidal pore in membranes). As to expression, expressed by the venom gland.

Its subcellular location is the secreted. It is found in the target cell membrane. Functionally, main toxin of bee venom with strong hemolytic activity and antimicrobial activity. It has enhancing effects on bee venom phospholipase A2 activity. This amphipathic toxin binds to negatively charged membrane surface and forms pore by inserting into lipid bilayers inducing the leakage of ions and molecules and the enhancement of permeability that ultimately leads to cell lysis. It acts as a voltage-gated pore with higher selectivity for anions over cations. The ion conductance has been shown to be voltage-dependent. Self-association of melittin in membranes is promoted by high ionic strength, but not by the presence of negatively charged lipids. In vivo, intradermal injection into healthy human volunteers produce sharp pain sensation and an inflammatory response. It produces pain by activating primary nociceptor cells directly and indirectly due to its ability to activate plasma membrane phospholipase A2 and its pore-forming activity. The sequence is that of Melittin (MELT) from Apis florea (Dwarf honeybee).